The sequence spans 154 residues: Interleukin-2 (154 aa).

The N-terminal stretch at 1-20 is a signal peptide; the sequence is MYRMQLLSCIALSLALITNS. Threonine 23 is a glycosylation site (O-linked (GalNAc...) threonine). A disulfide bridge links cysteine 78 with cysteine 126.

It belongs to the IL-2 family.

It is found in the secreted. Cytokine produced by activated CD4-positive helper T-cells and to a lesser extend activated CD8-positive T-cells and natural killer (NK) cells that plays pivotal roles in the immune response and tolerance. Binds to a receptor complex composed of either the high-affinity trimeric IL-2R (IL2RA/CD25, IL2RB/CD122 and IL2RG/CD132) or the low-affinity dimeric IL-2R (IL2RB and IL2RG). Interaction with the receptor leads to oligomerization and conformation changes in the IL-2R subunits resulting in downstream signaling starting with phosphorylation of JAK1 and JAK3. In turn, JAK1 and JAK3 phosphorylate the receptor to form a docking site leading to the phosphorylation of several substrates including STAT5. This process leads to activation of several pathways including STAT, phosphoinositide-3-kinase/PI3K and mitogen-activated protein kinase/MAPK pathways. Functions as a T-cell growth factor and can increase NK-cell cytolytic activity as well. Promotes strong proliferation of activated B-cells and subsequently immunoglobulin production. Plays a pivotal role in regulating the adaptive immune system by controlling the survival and proliferation of regulatory T-cells, which are required for the maintenance of immune tolerance. Moreover, participates in the differentiation and homeostasis of effector T-cell subsets, including Th1, Th2, Th17 as well as memory CD8-positive T-cells. In Papio hamadryas (Hamadryas baboon), this protein is Interleukin-2 (IL2).